Consider the following 60-residue polypeptide: Antimicrobial peptide Eval151 (60 aa).

A signal peptide spans 1–23 (MKVLPVLFLTLLVLISIPAETFC). Arg36 is subject to Arginine amide. Residues 36–54 (RGKRNDFFRSDVSRDDESH) show a composition bias toward basic and acidic residues. The segment at 36–60 (RGKRNDFFRSDVSRDDESHPSPGQK) is disordered. Positions 37-60 (GKRNDFFRSDVSRDDESHPSPGQK) are excised as a propeptide.

It belongs to the non-disulfide-bridged peptide (NDBP) superfamily. As to expression, expressed by the venom gland.

The protein resides in the secreted. Probable antimicrobial peptide. Has no inhibitory activity against herpes simplex virus type 1 (HSV-1). This chain is Antimicrobial peptide Eval151, found in Euscorpiops validus (Scorpion).